The following is a 428-amino-acid chain: Elongation factor 1-alpha (428 aa).

Residues 5–217 (KPHVNIVFIG…DQIPEPEKPT (213 aa)) enclose the tr-type G domain. The segment at 14-21 (GHVDHGKS) is G1. 14-21 (GHVDHGKS) provides a ligand contact to GTP. Ser21 contacts Mg(2+). The tract at residues 68 to 72 (GITID) is G2. A G3 region spans residues 89 to 92 (DAPG). GTP contacts are provided by residues 89-93 (DAPGH) and 144-147 (NKMD). Positions 144 to 147 (NKMD) are G4. The tract at residues 181 to 183 (SAW) is G5.

This sequence belongs to the TRAFAC class translation factor GTPase superfamily. Classic translation factor GTPase family. EF-Tu/EF-1A subfamily.

It is found in the cytoplasm. It carries out the reaction GTP + H2O = GDP + phosphate + H(+). Its function is as follows. GTP hydrolase that promotes the GTP-dependent binding of aminoacyl-tRNA to the A-site of ribosomes during protein biosynthesis. The chain is Elongation factor 1-alpha from Thermococcus sibiricus (strain DSM 12597 / MM 739).